The primary structure comprises 36 residues: uncharacterized protein (36 aa).

A compositionally biased stretch (polar residues) spans 1-14 (MNQLGSGPTKQGVA). The tract at residues 1–36 (MNQLGSGPTKQGVATNTGSTGTTKNNSNLSGKGWVL) is disordered. The segment covering 15–36 (TNTGSTGTTKNNSNLSGKGWVL) has biased composition (low complexity).

This is an uncharacterized protein from Dictyostelium discoideum (Social amoeba).